Here is a 276-residue protein sequence, read N- to C-terminus: Rhamnulose-1-phosphate aldolase (276 aa).

The active site involves Glu-117. Zn(2+)-binding residues include His-141, His-143, and His-212.

This sequence belongs to the aldolase class II family. RhaD subfamily. In terms of assembly, homotetramer. Zn(2+) serves as cofactor.

It localises to the cytoplasm. It carries out the reaction L-rhamnulose 1-phosphate = (S)-lactaldehyde + dihydroxyacetone phosphate. It participates in carbohydrate degradation; L-rhamnose degradation; glycerone phosphate from L-rhamnose: step 3/3. In terms of biological role, catalyzes the reversible cleavage of L-rhamnulose-1-phosphate to dihydroxyacetone phosphate (DHAP) and L-lactaldehyde. The sequence is that of Rhamnulose-1-phosphate aldolase from Klebsiella pneumoniae (strain 342).